The chain runs to 113 residues: Large ribosomal subunit protein bL19 (113 aa).

It belongs to the bacterial ribosomal protein bL19 family.

In terms of biological role, this protein is located at the 30S-50S ribosomal subunit interface and may play a role in the structure and function of the aminoacyl-tRNA binding site. The polypeptide is Large ribosomal subunit protein bL19 (Rhodococcus erythropolis (strain PR4 / NBRC 100887)).